Reading from the N-terminus, the 280-residue chain is Protein MGF 505-3R (280 aa).

It belongs to the asfivirus MGF 505 family.

Plays a role in virus cell tropism, and may be required for efficient virus replication in macrophages. This African swine fever virus (strain Badajoz 1971 Vero-adapted) (Ba71V) protein is Protein MGF 505-3R.